A 261-amino-acid chain; its full sequence is DNA repair protein RecO (261 aa).

It belongs to the RecO family.

In terms of biological role, involved in DNA repair and RecF pathway recombination. This Chlorobium phaeobacteroides (strain DSM 266 / SMG 266 / 2430) protein is DNA repair protein RecO.